Consider the following 504-residue polypeptide: O-fucosyltransferase 39 (504 aa).

The helical; Signal-anchor for type II membrane protein transmembrane segment at 11 to 27 (WILSMFFFVVLFCNNVS) threads the bilayer. N-linked (GlcNAc...) asparagine glycosylation occurs at Asn115. 288 to 290 (HLR) provides a ligand contact to substrate. N-linked (GlcNAc...) asparagine glycosylation is found at Asn359 and Asn460.

This sequence belongs to the glycosyltransferase GT106 family.

It is found in the membrane. Its pathway is glycan metabolism. This chain is O-fucosyltransferase 39, found in Arabidopsis thaliana (Mouse-ear cress).